Here is a 247-residue protein sequence, read N- to C-terminus: uncharacterized protein (247 aa).

The tract at residues 161-187 is disordered; it reads KEQSDATSDATTSEKNKSPECPKATTE. Residues 172–187 show a composition bias toward basic and acidic residues; it reads TSEKNKSPECPKATTE.

This is an uncharacterized protein from Mus musculus (Mouse).